Reading from the N-terminus, the 234-residue chain is Bradykinin-releasing enzyme KR-E-1 (234 aa).

A Peptidase S1 domain is found at 1 to 225 (VIGGDECNIN…YSDWIQSIIA (225 aa)). 6 disulfides stabilise this stretch: Cys-7–Cys-139, Cys-26–Cys-42, Cys-74–Cys-232, Cys-118–Cys-186, Cys-150–Cys-165, and Cys-176–Cys-201. Asn-20 is a glycosylation site (N-linked (GlcNAc...) asparagine). Active-site charge relay system residues include His-41 and Asp-86. Ser-180 serves as the catalytic Charge relay system.

This sequence belongs to the peptidase S1 family. Snake venom subfamily. In terms of assembly, monomer. As to expression, expressed by the venom gland.

It localises to the secreted. Functionally, bradykinin-releasing enzyme. Releases bradykinin from bovine HMW kininogen. Has anticoagulant activity. Increases permeability of capillaries by intradermal injection into rabbits. The protein is Bradykinin-releasing enzyme KR-E-1 of Gloydius ussuriensis (Ussuri mamushi).